A 58-amino-acid chain; its full sequence is MSPQTETKASVGFKAGVKDYKLTYYTPEYETKDTDILAAFRVTPQPGVPPEEAGAAVA.

The propeptide occupies 1 to 2; the sequence is MS. Pro3 carries the N-acetylproline modification. At Lys14 the chain carries N6,N6,N6-trimethyllysine.

Belongs to the RuBisCO large chain family. Type I subfamily. Heterohexadecamer of 8 large chains and 8 small chains.

The protein resides in the plastid. It localises to the chloroplast. It carries out the reaction 2 (2R)-3-phosphoglycerate + 2 H(+) = D-ribulose 1,5-bisphosphate + CO2 + H2O. The catalysed reaction is D-ribulose 1,5-bisphosphate + O2 = 2-phosphoglycolate + (2R)-3-phosphoglycerate + 2 H(+). RuBisCO catalyzes two reactions: the carboxylation of D-ribulose 1,5-bisphosphate, the primary event in carbon dioxide fixation, as well as the oxidative fragmentation of the pentose substrate in the photorespiration process. Both reactions occur simultaneously and in competition at the same active site. This chain is Ribulose bisphosphate carboxylase large chain (rbcL), found in Euphorbia characias (Albanian spurge).